The following is a 227-amino-acid chain: Cytochrome c oxidase subunit 2 (227 aa).

Over 1–14 (MAYPLQLGFQDAVS) the chain is Mitochondrial intermembrane. A helical membrane pass occupies residues 15–45 (PIMEELLYFHDHTLMIVFLISSLVLYIITLM). Over 46–59 (LTTKLTHTNTMNAQ) the chain is Mitochondrial matrix. A helical transmembrane segment spans residues 60 to 87 (EVETVWTILPAIILILIALPSLRILYMM). At 88–227 (DEINNPSLTV…TFEKWTASLL (140 aa)) the chain is on the mitochondrial intermembrane side. Residues histidine 161, cysteine 196, glutamate 198, cysteine 200, histidine 204, and methionine 207 each contribute to the Cu cation site. Residue glutamate 198 participates in Mg(2+) binding.

It belongs to the cytochrome c oxidase subunit 2 family. In terms of assembly, component of the cytochrome c oxidase (complex IV, CIV), a multisubunit enzyme composed of 14 subunits. The complex is composed of a catalytic core of 3 subunits MT-CO1, MT-CO2 and MT-CO3, encoded in the mitochondrial DNA, and 11 supernumerary subunits COX4I, COX5A, COX5B, COX6A, COX6B, COX6C, COX7A, COX7B, COX7C, COX8 and NDUFA4, which are encoded in the nuclear genome. The complex exists as a monomer or a dimer and forms supercomplexes (SCs) in the inner mitochondrial membrane with NADH-ubiquinone oxidoreductase (complex I, CI) and ubiquinol-cytochrome c oxidoreductase (cytochrome b-c1 complex, complex III, CIII), resulting in different assemblies (supercomplex SCI(1)III(2)IV(1) and megacomplex MCI(2)III(2)IV(2)). Found in a complex with TMEM177, COA6, COX18, COX20, SCO1 and SCO2. Interacts with TMEM177 in a COX20-dependent manner. Interacts with COX20. Interacts with COX16. Cu cation serves as cofactor.

The protein localises to the mitochondrion inner membrane. It catalyses the reaction 4 Fe(II)-[cytochrome c] + O2 + 8 H(+)(in) = 4 Fe(III)-[cytochrome c] + 2 H2O + 4 H(+)(out). Functionally, component of the cytochrome c oxidase, the last enzyme in the mitochondrial electron transport chain which drives oxidative phosphorylation. The respiratory chain contains 3 multisubunit complexes succinate dehydrogenase (complex II, CII), ubiquinol-cytochrome c oxidoreductase (cytochrome b-c1 complex, complex III, CIII) and cytochrome c oxidase (complex IV, CIV), that cooperate to transfer electrons derived from NADH and succinate to molecular oxygen, creating an electrochemical gradient over the inner membrane that drives transmembrane transport and the ATP synthase. Cytochrome c oxidase is the component of the respiratory chain that catalyzes the reduction of oxygen to water. Electrons originating from reduced cytochrome c in the intermembrane space (IMS) are transferred via the dinuclear copper A center (CU(A)) of subunit 2 and heme A of subunit 1 to the active site in subunit 1, a binuclear center (BNC) formed by heme A3 and copper B (CU(B)). The BNC reduces molecular oxygen to 2 water molecules using 4 electrons from cytochrome c in the IMS and 4 protons from the mitochondrial matrix. The chain is Cytochrome c oxidase subunit 2 (MT-CO2) from Hippopotamus amphibius (Hippopotamus).